Reading from the N-terminus, the 511-residue chain is Bifunctional purine biosynthesis protein PurH (511 aa).

The region spanning 1–146 (MTKRALVSVS…KNHADVTVVV (146 aa)) is the MGS-like domain.

It belongs to the PurH family.

It catalyses the reaction (6R)-10-formyltetrahydrofolate + 5-amino-1-(5-phospho-beta-D-ribosyl)imidazole-4-carboxamide = 5-formamido-1-(5-phospho-D-ribosyl)imidazole-4-carboxamide + (6S)-5,6,7,8-tetrahydrofolate. The enzyme catalyses IMP + H2O = 5-formamido-1-(5-phospho-D-ribosyl)imidazole-4-carboxamide. It functions in the pathway purine metabolism; IMP biosynthesis via de novo pathway; 5-formamido-1-(5-phospho-D-ribosyl)imidazole-4-carboxamide from 5-amino-1-(5-phospho-D-ribosyl)imidazole-4-carboxamide (10-formyl THF route): step 1/1. Its pathway is purine metabolism; IMP biosynthesis via de novo pathway; IMP from 5-formamido-1-(5-phospho-D-ribosyl)imidazole-4-carboxamide: step 1/1. The chain is Bifunctional purine biosynthesis protein PurH from Shouchella clausii (strain KSM-K16) (Alkalihalobacillus clausii).